The primary structure comprises 273 residues: Large ribosomal subunit protein uL2cz/uL2cy (273 aa).

Disordered stretches follow at residues 1-22 (MAIH…DSQV) and 223-254 (MNPV…PALG).

It belongs to the universal ribosomal protein uL2 family. Part of the 50S ribosomal subunit.

It localises to the plastid. It is found in the chloroplast. The polypeptide is Large ribosomal subunit protein uL2cz/uL2cy (rpl2-A) (Drimys granadensis).